Consider the following 524-residue polypeptide: Adhesion G-protein coupled receptor G5 (524 aa).

Positions 1 to 23 are cleaved as a signal peptide; the sequence is MDPHGALFFYLCLLAAQVVLVET. The Extracellular portion of the chain corresponds to 24-246; sequence LSDLLVLMKR…PAELQVPLEY (223 aa). 6 N-linked (GlcNAc...) asparagine glycosylation sites follow: Asn-58, Asn-65, Asn-96, Asn-143, Asn-169, and Asn-175. One can recognise a GAIN-B domain in the interval 74–235; it reads QSLVFKLSCD…AVLMQLSGDP (162 aa). Intrachain disulfides connect Cys-185–Cys-217 and Cys-205–Cys-219. The GPS stretch occupies residues 185–235; that stretch reads CVFWKEGASKSSWGAWSPEGCYTEQPSATQVLCHCNHLTYFAVLMQLSGDP. Residues 224–232 form a stachel region; sequence YFAVLMQLS. Residues 247–267 traverse the membrane as a helical segment; that stretch reads ISFVGCSISIVASLLTILLYA. The Cytoplasmic portion of the chain corresponds to 268-284; it reads QSRKQSDSTTRIHMNLN. Residues 285-305 traverse the membrane as a helical segment; it reads GSVLLLNVTFLLSSQMTLPTM. The Extracellular segment spans residues 306-319; the sequence is PRPVCKVLAAVLHY. A disulfide bridge connects residues Cys-310 and Cys-400. Residues 320–340 traverse the membrane as a helical segment; sequence ALLSSLTWMAIEGFNLYLFLG. Over 341 to 351 the chain is Cytoplasmic; the sequence is RVYNAYIRRYL. The helical transmembrane segment at 352-372 threads the bilayer; it reads LKLCMLGWGFPALLVLLLLMI. Residues 373 to 413 are Extracellular-facing; it reads KSSVYGPCVTSLSKSQENGTGFQNVSMCWIRSPMVHSILVM. Residues Asn-390 and Asn-396 are each glycosylated (N-linked (GlcNAc...) asparagine). The helical transmembrane segment at 414-434 threads the bilayer; it reads GYGGFTSLFNLVVLAWALWIL. Topologically, residues 435 to 453 are cytoplasmic; that stretch reads CRLRAREKALSPWAYRDTA. Residues 454 to 476 traverse the membrane as a helical segment; sequence MVLGLTVLLGTTWTLAFFSFGVF. Topologically, residues 477–480 are extracellular; sequence LLPQ. Residues 481–500 form a helical membrane-spanning segment; sequence LFLFTIFNSLYGFFLFLWFC. The Cytoplasmic segment spans residues 501–524; that stretch reads SQKRYSDAEAKAEMEAVSSSQMTH.

This sequence belongs to the G-protein coupled receptor 2 family. Adhesion G-protein coupled receptor (ADGR) subfamily. As to quaternary structure, heterodimer of 2 chains generated by proteolytic processing; the large extracellular N-terminal fragment and the membrane-bound C-terminal fragment predominantly remain associated and non-covalently linked. Post-translationally, autoproteolytically processed at the GPS region of the GAIN-B domain; this cleavage modulates receptor activity. In terms of tissue distribution, expressed at least in kidney, heart, brain and spleen. As to expression, isoform 1 is predominant in spleen. In the kidney, both isoform 1 and isoform 2 are expressed at similar levels. Isoform 2 is the major form in heart and brain. In the kidney, both isoform 1 and isoform 2 are expressed at similar levels.

Its subcellular location is the cell membrane. With respect to regulation, forms a heterodimer of 2 chains generated by proteolytic processing that remain associated through non-covalent interactions mediated by the GAIN-B domain. In the inactivated receptor, the Stachel sequence (also named stalk) is embedded in the GAIN-B domain, where it adopts a beta-strand conformation. On activation, the Stachel moves into the 7 transmembrane region and adopts a twisted hook-shaped configuration that forms contacts within the receptor, leading to coupling of a G-alpha protein, which activates signaling. The cleaved GAIN-B and N-terminal domains can then dissociate from the rest of the receptor. Orphan adhesion G-protein coupled receptor (aGPCR). Ligand binding causes a conformation change that triggers signaling via guanine nucleotide-binding proteins (G proteins) and modulates the activity of downstream effectors, such as adenylate cyclase. ADGRG5 is specifically coupled to G(s) G proteins and mediates activation of adenylate cyclase activity. In terms of biological role, isoform 1, but not isoform 2, is constitutively active, as evidenced by elevated basal cAMP levels, and responds to mechanical activation (shaking). The protein is Adhesion G-protein coupled receptor G5 of Mus musculus (Mouse).